A 1705-amino-acid polypeptide reads, in one-letter code: Intersectin-1 (1705 aa).

2 consecutive EH domains span residues 21–109 (ERAK…PVAM) and 220–309 (SRLK…SFRR). 2 consecutive EF-hand domains span residues 53–88 (LPQP…IKLK) and 253–288 (LPQS…IDVA). The Ca(2+) site is built by aspartate 66, asparagine 68, aspartate 70, arginine 72, glutamate 77, aspartate 266, aspartate 268, aspartate 270, lysine 272, and glutamate 277. Disordered regions lie at residues 322-355 (VSVD…KREN), 386-433 (RAEQ…ERRE), and 668-708 (RYKF…PPEP). A KLERQ region spans residues 325–697 (DQRLPEEPEE…VEKKPEIQEK (373 aa)). The span at 339–355 (NADKKLPVTFEDKKREN) shows a compositional bias: basic and acidic residues. Positions 350–687 (DKKRENFERG…KREESIQKCE (338 aa)) form a coiled coil. A compositionally biased stretch (basic and acidic residues) spans 668–699 (RYKFQDEEKEKREESIQKCEVEKKPEIQEKPN). In terms of domain architecture, SH3 1 spans 732–793 (VKVVYYRALY…PANYAERMPE (62 aa)). The span at 823–833 (AFTNTSTNSNN) shows a compositional bias: low complexity. The segment at 823–851 (AFTNTSTNSNNWADFSSTWPTNNTDKVES) is disordered. Residues 834–846 (WADFSSTWPTNNT) show a composition bias toward polar residues. The region spanning 897-955 (VEGLQAQALYPWRAKKDNHLNFNKNDVITVLEQQDMWWFGEVQGQKGWFPKSYVKLISG) is the SH3 2 domain. Residues 959–978 (KSTSIDSTSSESPASLKRVS) are disordered. Low complexity predominate over residues 960–973 (STSIDSTSSESPAS). SH3 domains follow at residues 986 to 1044 (IQGE…PKDS), 1058 to 1122 (KKPE…LLSP), and 1139 to 1198 (PPTC…LTTD). The Bipartite nuclear localization signal; in isoform 2 signature appears at 1088–1111 (RKKNPGGWWEGELQARGKKRQIGW). The DH domain maps to 1221 to 1407 (KRQGYIHELI…EELCSQVNEG (187 aa)). Residues 1446-1555 (KFLHSGKLYK…WVQKIKAASE (110 aa)) enclose the PH domain. The 117-residue stretch at 1563 to 1679 (KKREKAYLVR…KKDQGSKGPV (117 aa)) folds into the C2 domain. Ca(2+) contacts are provided by aspartate 1651, serine 1654, and aspartate 1657.

Binds epn1 and epn2. Requires Ca(2+) as cofactor.

Its subcellular location is the endomembrane system. The protein localises to the synapse. The protein resides in the synaptosome. It is found in the cell projection. It localises to the lamellipodium. Its subcellular location is the cell membrane. The protein localises to the membrane. The protein resides in the clathrin-coated pit. It is found in the recycling endosome. It localises to the cytoplasm. Its subcellular location is the nucleus envelope. Adapter protein that provides a link between the endocytic membrane traffic and the actin assembly machinery. Acts as a guanine nucleotide exchange factor (GEF) for cdc42, and thereby stimulates actin nucleation mediated by wasl and the arp2/3 complex. Involved in endocytosis of activated egfr, and probably also other growth factor receptors. The polypeptide is Intersectin-1 (itsn1) (Xenopus laevis (African clawed frog)).